Reading from the N-terminus, the 209-residue chain is Protein GrpE (209 aa).

Belongs to the GrpE family. Homodimer.

It is found in the cytoplasm. Its function is as follows. Participates actively in the response to hyperosmotic and heat shock by preventing the aggregation of stress-denatured proteins, in association with DnaK and GrpE. It is the nucleotide exchange factor for DnaK and may function as a thermosensor. Unfolded proteins bind initially to DnaJ; upon interaction with the DnaJ-bound protein, DnaK hydrolyzes its bound ATP, resulting in the formation of a stable complex. GrpE releases ADP from DnaK; ATP binding to DnaK triggers the release of the substrate protein, thus completing the reaction cycle. Several rounds of ATP-dependent interactions between DnaJ, DnaK and GrpE are required for fully efficient folding. The polypeptide is Protein GrpE (Colwellia psychrerythraea (strain 34H / ATCC BAA-681) (Vibrio psychroerythus)).